Consider the following 869-residue polypeptide: MDAAGASCSSVDAVARELLMATLEELSQEQLKRFRHKLRDAPLDGRSIPWGRLERSDAVDLVDKLIEFYEPVPAVEMTRQVLKRSDIRDVASRLKQQQLQKLGPTSVLLSVSAFKKKYREHVLRQHAKVKERNARSVKINKRFTKLLIAPGTGAVEDELLGPLGEPEPERARRSDTHTFNRLFRGNDEESSQPLTVVLQGPAGIGKTMAAKKILYDWAAGKLYHSQVDFAFFMPCGELLERPGKRSLADLVLDQCPDRAWPVKRILAQPNRLLFILDGADELPTLPSSEATPCKDPLEATSGLRVLSGLLSQELLPGARLLVTTRHAATGRLQGRLCSPQCAEIRGFSDKDKKKYFFKFFRDERKAERAYRFVKENETLFALCFVPFVCWIVCTVLQQQLELGRDLSRTSKTTTSVYLLFITSMLKSAGTNGPRVQGELRTLCRLAREGILDHHKAQFSEEDLEKLKLRGSQVQTIFLNKKEIPGVLKTEVTYQFIDQSFQEFLAALSYLLEAERTPGTPAGGVQKLLNSDAELRGHLALTTRFLFGLLNTEGLRDIGNHFGCVVPDHVKKDTLRWVQGQSHPKGPPVGAKKTAELEDIEDAEEEEEEEEDLNFGLELLYCLYETQEEDFVRQALSSLPEIVLERVRLTRMDLEVLNYCVQCCPDGQALRLVSCGLVAAKEKKKKKKSLVKRLKGSQSTKKQPPVSLLRPLCETMTTPKCHLSVLILSHCRLPDAVCRDLSEALKVAPALRELGLLQSRLTNTGLRLLCEGLAWPKCQVKTLRMQLPDLQEVINYLVIVLQQSPVLTTLDLSGCQLPGVIVEPLCAALKHPKCSLKTLSLTSVELSENSLRDLQAVKTSKPDLSIIYSK.

Residues 37–128 (KLRDAPLDGR…REHVLRQHAK (92 aa)) form the Pyrin domain. Positions 194 to 511 (LTVVLQGPAG…EFLAALSYLL (318 aa)) constitute an NACHT domain. ATP is bound at residue 200–207 (GPAGIGKT). The tract at residues 350 to 354 (KDKKK) is disordered. One copy of the LRR 1 repeat lies at 460–485 (EEDLEKLKLRGSQVQTIFLNKKEIPG). Positions 577 to 608 (VQGQSHPKGPPVGAKKTAELEDIEDAEEEEEE) are disordered. The segment covering 596–608 (LEDIEDAEEEEEE) has biased composition (acidic residues). LRR repeat units follow at residues 635–658 (LSSL…VLNY) and 837–860 (TLSL…KTSK).

This sequence belongs to the NLRP family. Homomultimer; forms the NLRP6 inflammasome polymeric complex, a filament composed of homopolymers in response to pathogens and other damage-associated signals. The core of NLRP6 inflammasomes consists of a signal sensor component (NLRP6), an adapter (PYCARD/ASC), which recruits effector pro-inflammatory caspases (CASP1 and CASP4). Interacts (via pyrin domain) with PYCARD/ASC (via pyrin domain); interaction takes place following NLRP6 activation and formation of liquid-liquid phase separation (LLPS), initiating nucleation which greatly enhances further addition of soluble PYCARD/ASC molecules to the speck in a prion-like polymerization process. Clustered PYCARD/ASC nucleates the formation of CASP1 (or possibly CASP4) filaments through the interaction of their respective CARD domains, acting as a platform for CASP1 polymerization. CASP1 filament formation increases local enzyme concentration, resulting in trans-autocleavage and activation. Active CASP1 then processes IL1B and IL18 precursors, leading to the release of mature cytokines in the extracellular milieu and inflammatory response. Interacts with DHX15. Post-translationally, polyubiquitinated with 'Lys-63'-linked chains, promoting the interaction with PYCARD/ASC and formation of the NLRP6 inflammasome. Deubiquitination by CYLD decreases the interaction with PYCARD/ASC. In terms of tissue distribution, highly expressed in the gastrointestinal tract, predominantly in colonic myofibroblasts and in colonic epithelial and endothelial cells. Within the intestinal mucosa, highly expressed by goblet cells. Also expressed in hepatocytes and in immune cells, including CD4(+) and CD8(+) T-cells, dendritic cells, mastocytes and peritoneal macrophages, as well as in lung, kidney, bladder and gonads.

It is found in the cytoplasm. The protein resides in the inflammasome. The protein localises to the cell membrane. Its subcellular location is the nucleus membrane. Acts as the sensor component of the NLRP6 inflammasome, which mediates inflammasome activation in response to various pathogen-associated signals, leading to maturation and secretion of IL1B and IL18. Inflammasomes are supramolecular complexes that assemble in the cytosol in response to pathogens and other damage-associated signals and play critical roles in innate immunity and inflammation. Acts as a recognition receptor (PRR): recognizes and binds specific pathogens and other damage-associated signals, such as lipoteichoic acid (LTA), a cell-wall component of Gram-positive bacteria, or double stranded RNA (dsRNA). May also recognize and bind lipopolysaccharide (LPS), a major component of the outer membrane of Gram-negative bacteria; however, LPS is probably not a major activator of the NLRP6 inflammasome. Following LTA- or dsRNA-binding, NLRP6 undergoes liquid-liquid phase separation (LLPS), enhancing multivalent interactions, an essential step for the formation of the NLRP6 inflammasome polymeric complex. The NLRP6 inflammasome acts by promoting recruitment of effector pro-inflammatory caspases (CASP1 and/or CASP4) that catalyze maturation and secretion of IL1B and IL18 in the extracellular milieu. The NLRP6 inflammasome plays a central role in the maintenance of epithelial integrity and host defense against microbial infections in the intestine. Required to restrict infection against Gram-positive bacteria by recognizing lipoteichoic acid (LTA), leading to recruitment of CASP4 and CASP1, and subsequent maturation and secretion of IL1B and IL18. Involved in intestinal antiviral innate immunity together with DHX15: recognizes and binds viral dsRNA to restrict infection by enteric viruses through the interferon pathway and GSDMD-dependent release of IL18. Required to prevent infection by the apicomplexan parasite C.tyzzeri in enterocytes by promoting GSDMD-dependent release of IL18. The NLRP6 inflammasome may also regulate the gut microbiota composition by acting as a sensor of microbiota-associated metabolites to form a PYCARD/ASC-dependent inflammasome for downstream IL18 release and secretion of antimicrobial peptides. Its role in the regulation of the gut microbiota composition is however subject to discussion. Essential for gut mucosal self-renewal and proliferation. Regulate mucus secretion in an inflammasome- and autophagy-dependent manner to prevent invasion by enteric bacteria. During systemic bacterial infections, the NLRP6 inflammasome negatively regulates neutrophil recruitment and neutrophil extracellular traps (NETs) formation. May promote peripheral nerve recovery following injury via an inflammasome-independent mechanism. The chain is NACHT, LRR and PYD domains-containing protein 6 from Mus musculus (Mouse).